The sequence spans 693 residues: Elongation factor G (693 aa).

Residues glutamate 8–leucine 282 form the tr-type G domain. Residues alanine 17 to threonine 24, aspartate 81 to histidine 85, and asparagine 135 to aspartate 138 contribute to the GTP site.

The protein belongs to the TRAFAC class translation factor GTPase superfamily. Classic translation factor GTPase family. EF-G/EF-2 subfamily.

Its subcellular location is the cytoplasm. Functionally, catalyzes the GTP-dependent ribosomal translocation step during translation elongation. During this step, the ribosome changes from the pre-translocational (PRE) to the post-translocational (POST) state as the newly formed A-site-bound peptidyl-tRNA and P-site-bound deacylated tRNA move to the P and E sites, respectively. Catalyzes the coordinated movement of the two tRNA molecules, the mRNA and conformational changes in the ribosome. The chain is Elongation factor G from Streptococcus suis (strain 05ZYH33).